A 608-amino-acid chain; its full sequence is Elongation factor 4 (608 aa).

One can recognise a tr-type G domain in the interval 11–193 (DHIRNFSIVA…AIVNRLPPPK (183 aa)). Residues 23 to 28 (DHGKST) and 140 to 143 (NKID) each bind GTP.

The protein belongs to the TRAFAC class translation factor GTPase superfamily. Classic translation factor GTPase family. LepA subfamily.

It is found in the cell inner membrane. The enzyme catalyses GTP + H2O = GDP + phosphate + H(+). Required for accurate and efficient protein synthesis under certain stress conditions. May act as a fidelity factor of the translation reaction, by catalyzing a one-codon backward translocation of tRNAs on improperly translocated ribosomes. Back-translocation proceeds from a post-translocation (POST) complex to a pre-translocation (PRE) complex, thus giving elongation factor G a second chance to translocate the tRNAs correctly. Binds to ribosomes in a GTP-dependent manner. The polypeptide is Elongation factor 4 (Agrobacterium fabrum (strain C58 / ATCC 33970) (Agrobacterium tumefaciens (strain C58))).